The chain runs to 126 residues: Glycine cleavage system H protein (126 aa).

Residues 22-104 form the Lipoyl-binding domain; it reads VATVGITEYA…YEKAWMVKIE (83 aa). Lys63 carries the N6-lipoyllysine modification.

This sequence belongs to the GcvH family. The glycine cleavage system is composed of four proteins: P, T, L and H. It depends on (R)-lipoate as a cofactor.

Functionally, the glycine cleavage system catalyzes the degradation of glycine. The H protein shuttles the methylamine group of glycine from the P protein to the T protein. Is also involved in protein lipoylation via its role as an octanoyl/lipoyl carrier protein intermediate. The chain is Glycine cleavage system H protein from Staphylococcus epidermidis (strain ATCC 12228 / FDA PCI 1200).